A 606-amino-acid polypeptide reads, in one-letter code: MKVLGLISGGKDSCFNLMHCVSLGHEVVALANLHPEDGKDEIDSFMYQSVGHDVIPLYAECFDLPLYREKIGGQSINQNLDYQFTEKDETEDLYRLIKRVLTNHPDLEAVSTGAILSTYQRTRVENVCKRLGLKSLSFLWQKDQEKLLNDMVVSGLNAILIKVAAIGLTRKDLGKSLAEMQDKLLTLNKKFELHPCGEGGEYETLVLDCPLFKKRIVLTDKEVVEHSSGEVCYLKVKACVKDKPEWQPISLKSELVPNEELLGEEYSHIYHTISKKYELIDDQEETPTSLIPIPLRESAFQQKKGSFLVLGNVVATKGSYNTFQGEAESAINNLNELLGTYGYSNKNVYFVTVILSSMSKFAEFNSVYNKYFDFTNPPSRSCVAAPLASEYRIVMSCIVGDVTEKRALHVQGQSYWAPANIGPYSQSICANGVVFISGQIGLIPSVMELKLHDKIFEMVLALQHANRVAKAMRVGSLIACLAYVCDSRDADCVVKIWSEYTKNTGESSPVLVALVDALPRNASVEWQLLYNDSSCDVPLLSSLVTNQTLFGSDTAWDVALLNQNGLRMESSFIHHEHPSAYAIVLNNAFPNSQLLHVRYTARDQNV.

In the N-terminal section; belongs to the Diphthine--ammonia ligase family. It in the C-terminal section; belongs to the RutC family.

The protein localises to the cytoplasm. It localises to the nucleus. It carries out the reaction diphthine-[translation elongation factor 2] + NH4(+) + ATP = diphthamide-[translation elongation factor 2] + AMP + diphosphate + H(+). The protein operates within protein modification; peptidyl-diphthamide biosynthesis. Functionally, amidase that catalyzes the last step of diphthamide biosynthesis using ammonium and ATP. Diphthamide biosynthesis consists in the conversion of an L-histidine residue in the translation elongation factor eEF-2 (eft201 or eft202) to diphthamide. Has a role in meiosis. This Schizosaccharomyces pombe (strain 972 / ATCC 24843) (Fission yeast) protein is Diphthine--ammonia ligase (mug71).